Reading from the N-terminus, the 579-residue chain is MKMILVRRFRVLILVVFLLACALHIAVDLLPKLDRRATRSSGEPGCSCAQPAAEAAGPGWAQARSRPGESAGGDAGWPNKHTLRILQDFSSDPASNLTSHSLEKLPSAAEPVDHAPRGQEPRSPPPRDPAHRPLLRDPGPRPRVPPPGPSGDGSLLAKLFEHPLYQGAVPPLTEDDVLFNVNSDIRFNPKAAENPDWPHEGAEGAEFLPTGEAAVNLYPNWLKFHIGINRYELYSRHNPAIDALLRDLGSQKITSVAMKSGGTQLKLIMTFQNYGQALFKPMKQTREQETPPDFFYFSDYERHNAEIAAFHLDRILDFRRVPPVAGRMINMTKEIRDVTRDKKLWRTFFVSPANNICFYGECSYYCSTEHALCGRPDQIEGSLAAFLPDLSLAKRKTWRNPWRRSYHKRKKAEWEVDPDYCEEVKQTPPYDSGHRILDIMDMTVFDFLMGNMDRHHYETFEKFGNETFIIHLDNGRGFGKYSHDELSILAPLHQCCRIRRSTYLRLQLLAKEEHKLSLLMAESLQHDKVAPVLYQLHLEALDRRLRIVLQAVRDCVEKDGLSSVVEDDLATEHRASTER.

At M1–R10 the chain is on the cytoplasmic side. A propeptide spanning residues M1 to Q87 is cleaved from the precursor. A helical; Signal-anchor for type II membrane protein membrane pass occupies residues V11 to P31. The Lumenal portion of the chain corresponds to K32–R579. Residues T38–N79 form a disordered region. Over residues A49–A63 the composition is skewed to low complexity. The N-linked (GlcNAc...) asparagine glycan is linked to N96. A disordered region spans residues K104 to L155. Composition is skewed to basic and acidic residues over residues P111–E120 and D128–P140. ATP contacts are provided by Q264, K280, and E301. E301 is a binding site for Mn(2+). A kinase domain region spans residues F349–G560. 2 cysteine pairs are disulfide-bonded: C357–C373 and C362–C366. A384–L387 provides a ligand contact to ATP. 2 disulfide bridges follow: C421-C495 and C496-C555. D453 is a catalytic residue. Residues E458 and D473 each coordinate ATP. Mn(2+) is bound at residue D473.

The protein belongs to the FAM20 family. As to quaternary structure, homodimer; disulfide-linked. Interacts with FAM20A; probably forming a heterotetramer of 2 subunits of FAM20A and 2 subunits of FAM20C. Interacts with COPII components SEC23A and SEC24A; transport of FAM20C from the endoplasmic reticulum to the Golgi is likely to be mediated by COPII vesicles. The cofactor is Mn(2+). In terms of processing, N-glycosylation is required for folding. Post-translationally, autophosphorylated. Propeptide cleavage by MBTPS1/S1P promotes FAM20C secretion and maximal kinase activity which is essential for efficient osteoblast differentiation and biomineralization. In terms of tissue distribution, in the mammary gland, expressed at higher levels in lactating mice than in virgin mice (at protein level). Highly expressed in the tooth. No expression in the dental pulp. At the secretory stage of amelogenesis, it is detected in the matrix of the enamel, in the ameloblasts, and within the cells adjoining the stratum intermedium (a tissue layer analogous to the stellate reticulum seen in the developing molar). Strong expression is observed in maturation stage ameloblasts and throughout the non-cornified layers of the gingival epithelium. Expressed at moderate levels in bone and at low levels in kidney, liver, brain and lung. Very low expression, if any, in spleen and skeletal muscle.

It localises to the golgi apparatus membrane. Its subcellular location is the secreted. The protein localises to the endoplasmic reticulum. The catalysed reaction is L-seryl-[protein] + ATP = O-phospho-L-seryl-[protein] + ADP + H(+). It catalyses the reaction L-threonyl-[protein] + ATP = O-phospho-L-threonyl-[protein] + ADP + H(+). With respect to regulation, serine/threonine protein kinase activity is increased upon interaction with FAM20A. Its function is as follows. Golgi serine/threonine protein kinase that phosphorylates secretory pathway proteins within Ser-x-Glu/pSer motifs and plays a key role in biomineralization of bones and teeth. Constitutes the main protein kinase for extracellular proteins, generating the majority of the extracellular phosphoproteome. Mainly phosphorylates proteins within the Ser-x-Glu/pSer motif, but also displays a broader substrate specificity. Phosphorylates ERO1A, enhancing its activity which is required to maintain endoplasmic reticulum redox homeostasis and for oxidative protein folding. During endoplasmic reticulum stress, phosphorylates P4HB/PDIA1 which induces a functional switch, causing P4HB to change from an oxidoreductase to a molecular chaperone. This is critical to maintain ER proteostasis and reduce cell death under ER stress. Phosphorylation of P4HB also promotes its interaction with ERN1, leading to reduced activity of ERN1, a key sensor for the endoplasmic reticulum unfolded protein response. Required for osteoblast differentiation and mineralization. Phosphorylates casein as well as a number of proteins involved in biomineralization such as AMELX, AMTN, ENAM and SPP1. In addition to its role in biomineralization, also plays a role in lipid homeostasis, wound healing and cell migration and adhesion. In Mus musculus (Mouse), this protein is Extracellular serine/threonine protein kinase FAM20C.